The following is a 393-amino-acid chain: Lipid-A-disaccharide synthase (393 aa).

Belongs to the LpxB family.

The catalysed reaction is a lipid X + a UDP-2-N,3-O-bis[(3R)-3-hydroxyacyl]-alpha-D-glucosamine = a lipid A disaccharide + UDP + H(+). It participates in bacterial outer membrane biogenesis; LPS lipid A biosynthesis. Its function is as follows. Condensation of UDP-2,3-diacylglucosamine and 2,3-diacylglucosamine-1-phosphate to form lipid A disaccharide, a precursor of lipid A, a phosphorylated glycolipid that anchors the lipopolysaccharide to the outer membrane of the cell. This Rhodopseudomonas palustris (strain ATCC BAA-98 / CGA009) protein is Lipid-A-disaccharide synthase.